Consider the following 131-residue polypeptide: UPF0146 protein PH0209 (131 aa).

This sequence belongs to the UPF0146 family.

In Pyrococcus horikoshii (strain ATCC 700860 / DSM 12428 / JCM 9974 / NBRC 100139 / OT-3), this protein is UPF0146 protein PH0209.